Here is a 56-residue protein sequence, read N- to C-terminus: MGPQGFYWSHPRKFGQGSRSCRVCSNRHGLIRKYGLNMCRQCFRQYAKDIGFIKLD.

Phosphoserine is present on Ser-9. The residue at position 12 (Arg-12) is an Omega-N-methylarginine. 4 residues coordinate Zn(2+): Cys-21, Cys-24, Cys-39, and Cys-42. Lys-48 is subject to N6-acetyllysine.

It belongs to the universal ribosomal protein uS14 family. As to quaternary structure, component of the 40S small ribosomal subunit. It depends on Zn(2+) as a cofactor.

The protein localises to the cytoplasm. It localises to the cytosol. It is found in the rough endoplasmic reticulum. In terms of biological role, component of the small ribosomal subunit. The ribosome is a large ribonucleoprotein complex responsible for the synthesis of proteins in the cell. The chain is Small ribosomal subunit protein uS14 (RPS29) from Sus scrofa (Pig).